We begin with the raw amino-acid sequence, 428 residues long: Glutamate-1-semialdehyde 2,1-aminomutase 1 (428 aa).

The residue at position 268 (Lys-268) is an N6-(pyridoxal phosphate)lysine.

This sequence belongs to the class-III pyridoxal-phosphate-dependent aminotransferase family. HemL subfamily. As to quaternary structure, homodimer. Pyridoxal 5'-phosphate serves as cofactor.

It localises to the cytoplasm. It carries out the reaction (S)-4-amino-5-oxopentanoate = 5-aminolevulinate. It participates in porphyrin-containing compound metabolism; protoporphyrin-IX biosynthesis; 5-aminolevulinate from L-glutamyl-tRNA(Glu): step 2/2. The polypeptide is Glutamate-1-semialdehyde 2,1-aminomutase 1 (Bacillus cereus (strain G9842)).